Here is a 168-residue protein sequence, read N- to C-terminus: Peptidoglycan-associated lipoprotein (168 aa).

An N-terminal signal peptide occupies residues 1–24 (MGRIAALTRNPVMIALVAMLAIAG). C25 is lipidated: N-palmitoyl cysteine. Residue C25 is the site of S-diacylglycerol cysteine attachment. One can recognise an OmpA-like domain in the interval 50–167 (AQDFTVNIGD…RAVTTLSGAG (118 aa)).

This sequence belongs to the Pal lipoprotein family. As to quaternary structure, the Tol-Pal system is composed of five core proteins: the inner membrane proteins TolA, TolQ and TolR, the periplasmic protein TolB and the outer membrane protein Pal. They form a network linking the inner and outer membranes and the peptidoglycan layer.

It is found in the cell outer membrane. Functionally, part of the Tol-Pal system, which plays a role in outer membrane invagination during cell division and is important for maintaining outer membrane integrity. The protein is Peptidoglycan-associated lipoprotein of Mesorhizobium japonicum (strain LMG 29417 / CECT 9101 / MAFF 303099) (Mesorhizobium loti (strain MAFF 303099)).